The sequence spans 163 residues: Cytochrome b6-f complex subunit 4 (163 aa).

Transmembrane regions (helical) follow at residues 36–56 (LLYI…GLAV), 95–115 (LLGV…PFLE), and 131–151 (TVFL…TLPI).

This sequence belongs to the cytochrome b family. PetD subfamily. The 4 large subunits of the cytochrome b6-f complex are cytochrome b6, subunit IV (17 kDa polypeptide, petD), cytochrome f and the Rieske protein, while the 4 small subunits are petG, petL, petM and petN. The complex functions as a dimer.

It is found in the plastid. It localises to the chloroplast thylakoid membrane. Component of the cytochrome b6-f complex, which mediates electron transfer between photosystem II (PSII) and photosystem I (PSI), cyclic electron flow around PSI, and state transitions. This chain is Cytochrome b6-f complex subunit 4, found in Drimys granadensis.